A 703-amino-acid polypeptide reads, in one-letter code: Polyribonucleotide nucleotidyltransferase (703 aa).

Mg(2+) contacts are provided by aspartate 488 and aspartate 494. The KH domain occupies 555-614 (PKIVKMQINPDKIKDVIGPGGKIITKIIDETGVKIDIEQTGEVFISGIEIDMIKKAQELI). In terms of domain architecture, S1 motif spans 624 to 692 (GKTYKGKVSR…EKGRVNLSRK (69 aa)).

It belongs to the polyribonucleotide nucleotidyltransferase family. Mg(2+) serves as cofactor.

The protein resides in the cytoplasm. The enzyme catalyses RNA(n+1) + phosphate = RNA(n) + a ribonucleoside 5'-diphosphate. In terms of biological role, involved in mRNA degradation. Catalyzes the phosphorolysis of single-stranded polyribonucleotides processively in the 3'- to 5'-direction. This Clostridioides difficile (strain 630) (Peptoclostridium difficile) protein is Polyribonucleotide nucleotidyltransferase.